Reading from the N-terminus, the 384-residue chain is Probable tRNA sulfurtransferase (384 aa).

The THUMP domain occupies 57 to 160; it reads EEVVDRVRNV…KKTYIYSKRI (104 aa). ATP is bound by residues 177–178, 202–203, Arg259, Gly281, and Gln290; these read ML and YF.

This sequence belongs to the ThiI family.

Its subcellular location is the cytoplasm. It carries out the reaction [ThiI sulfur-carrier protein]-S-sulfanyl-L-cysteine + a uridine in tRNA + 2 reduced [2Fe-2S]-[ferredoxin] + ATP + H(+) = [ThiI sulfur-carrier protein]-L-cysteine + a 4-thiouridine in tRNA + 2 oxidized [2Fe-2S]-[ferredoxin] + AMP + diphosphate. The catalysed reaction is [ThiS sulfur-carrier protein]-C-terminal Gly-Gly-AMP + S-sulfanyl-L-cysteinyl-[cysteine desulfurase] + AH2 = [ThiS sulfur-carrier protein]-C-terminal-Gly-aminoethanethioate + L-cysteinyl-[cysteine desulfurase] + A + AMP + 2 H(+). It functions in the pathway cofactor biosynthesis; thiamine diphosphate biosynthesis. In terms of biological role, catalyzes the ATP-dependent transfer of a sulfur to tRNA to produce 4-thiouridine in position 8 of tRNAs, which functions as a near-UV photosensor. Also catalyzes the transfer of sulfur to the sulfur carrier protein ThiS, forming ThiS-thiocarboxylate. This is a step in the synthesis of thiazole, in the thiamine biosynthesis pathway. The sulfur is donated as persulfide by IscS. The protein is Probable tRNA sulfurtransferase of Clostridium acetobutylicum (strain ATCC 824 / DSM 792 / JCM 1419 / IAM 19013 / LMG 5710 / NBRC 13948 / NRRL B-527 / VKM B-1787 / 2291 / W).